We begin with the raw amino-acid sequence, 274 residues long: MSTDNINTPMIELKNVKFKYSTGTSFALNDVSINFPQGKYTAILGHNGSGKSTLSKIIAGLYKPTSGDVYIDGIKLQRSTLRKLQEKIGIIFQNPDNQFIGATVEDDIAFGLENKLIPRNEMKKIILDLSKRVGMDKYLDREPQYLSGGQKQRVAIASILALDPEIIIFDEVTSMLDPKGKKEVLKLIREIQQTRKKTLISITHDMDEAILADRVLVLAEGELIASGDPLEILKNERVIEIAKIDSPFIYRVSKLLKNVDPTYDQDKLIGEICK.

An ABC transporter domain is found at 11–245 (IELKNVKFKY…ERVIEIAKID (235 aa)). ATP is bound at residue 45–52 (GHNGSGKS).

Belongs to the ABC transporter superfamily. Energy-coupling factor EcfA family. Forms a stable energy-coupling factor (ECF) transporter complex composed of 2 membrane-embedded substrate-binding proteins (S component), 2 ATP-binding proteins (A component) and 2 transmembrane proteins (T component).

The protein localises to the cell membrane. ATP-binding (A) component of a common energy-coupling factor (ECF) ABC-transporter complex. Unlike classic ABC transporters this ECF transporter provides the energy necessary to transport a number of different substrates. The polypeptide is Energy-coupling factor transporter ATP-binding protein EcfA1 (Mycoplasma mobile (strain ATCC 43663 / 163K / NCTC 11711) (Mesomycoplasma mobile)).